Consider the following 624-residue polypeptide: LEAF RUST 10 DISEASE-RESISTANCE LOCUS RECEPTOR-LIKE PROTEIN KINASE-like 2.2 (624 aa).

The first 30 residues, Met1–Ser30, serve as a signal peptide directing secretion. At Gln31–Thr263 the chain is on the extracellular side. N-linked (GlcNAc...) asparagine glycans are attached at residues Asn45, Asn75, Asn85, Asn95, Asn150, and Asn164. Residues Ile264–Phe284 traverse the membrane as a helical segment. At Trp285 to Val624 the chain is on the cytoplasmic side. The Protein kinase domain occupies Lys317 to Leu599. Residues Val323–Val331 and Lys345 each bind ATP. Asp434 functions as the Proton acceptor in the catalytic mechanism. A disordered region spans residues Asn587–Val624. Residues Met603–Val624 are compositionally biased toward polar residues.

The protein belongs to the protein kinase superfamily. Ser/Thr protein kinase family.

The protein resides in the membrane. It carries out the reaction L-seryl-[protein] + ATP = O-phospho-L-seryl-[protein] + ADP + H(+). The enzyme catalyses L-threonyl-[protein] + ATP = O-phospho-L-threonyl-[protein] + ADP + H(+). This chain is LEAF RUST 10 DISEASE-RESISTANCE LOCUS RECEPTOR-LIKE PROTEIN KINASE-like 2.2, found in Arabidopsis thaliana (Mouse-ear cress).